The primary structure comprises 406 residues: 2,3-bisphosphoglycerate-independent phosphoglycerate mutase (406 aa).

Positions 156–183 (NLSDKISDSDPHSEGKPPEPIRPLDPSA) are disordered. The span at 160–174 (KISDSDPHSEGKPPE) shows a compositional bias: basic and acidic residues.

This sequence belongs to the BPG-independent phosphoglycerate mutase family. A-PGAM subfamily.

It carries out the reaction (2R)-2-phosphoglycerate = (2R)-3-phosphoglycerate. The protein operates within carbohydrate degradation; glycolysis; pyruvate from D-glyceraldehyde 3-phosphate: step 3/5. Catalyzes the interconversion of 2-phosphoglycerate and 3-phosphoglycerate. The polypeptide is 2,3-bisphosphoglycerate-independent phosphoglycerate mutase (Thermoplasma volcanium (strain ATCC 51530 / DSM 4299 / JCM 9571 / NBRC 15438 / GSS1)).